Consider the following 317-residue polypeptide: Universal stress protein Mb2019 (317 aa).

ATP-binding positions include glycine 13, glycine 128–alanine 134, serine 142–valine 143, glycine 175, aspartate 208, glycine 277–glycine 283, and serine 291–serine 293.

The protein belongs to the universal stress protein A family.

In Mycobacterium bovis (strain ATCC BAA-935 / AF2122/97), this protein is Universal stress protein Mb2019.